The chain runs to 211 residues: ATP-dependent dethiobiotin synthetase BioD (211 aa).

10–15 serves as a coordination point for ATP; that stretch reads GIGKTY. Residue Thr-14 participates in Mg(2+) binding. Lys-35 is an active-site residue. Position 39 (Ser-39) interacts with substrate. Residues Asp-44, 105-108, and 165-166 contribute to the ATP site; these read EGAG and NC. The Mg(2+) site is built by Asp-44 and Glu-105.

The protein belongs to the dethiobiotin synthetase family. In terms of assembly, homodimer. The cofactor is Mg(2+).

The protein resides in the cytoplasm. The catalysed reaction is (7R,8S)-7,8-diammoniononanoate + CO2 + ATP = (4R,5S)-dethiobiotin + ADP + phosphate + 3 H(+). Its pathway is cofactor biosynthesis; biotin biosynthesis; biotin from 7,8-diaminononanoate: step 1/2. Catalyzes a mechanistically unusual reaction, the ATP-dependent insertion of CO2 between the N7 and N8 nitrogen atoms of 7,8-diaminopelargonic acid (DAPA, also called 7,8-diammoniononanoate) to form a ureido ring. The chain is ATP-dependent dethiobiotin synthetase BioD from Methanococcus vannielii (strain ATCC 35089 / DSM 1224 / JCM 13029 / OCM 148 / SB).